We begin with the raw amino-acid sequence, 46 residues long: Protein krueppel (46 aa).

3 C2H2-type zinc fingers span residues 1-4 (MRLH), 10-32 (YHCTHCERQFVQVANLRRHLRVH), and 38-46 (YACELCTSK).

Belongs to the krueppel C2H2-type zinc-finger protein family.

The protein resides in the nucleus. In terms of biological role, krueppel is a gap class segmentation protein. This Lithobius forficatus (Centipede) protein is Protein krueppel (Kr).